The sequence spans 215 residues: Vesicle transport protein SFT2C (215 aa).

Topologically, residues 1-82 (MADLHRQLQE…RGQRLAAGGG (82 aa)) are cytoplasmic. Residues 83-103 (CLLLAALCFGLAALYAPVLLL) traverse the membrane as a helical segment. The Lumenal segment spans residues 104–107 (RARK). Residues 108-128 (FALLWSLGSALALAGSALLRG) form a helical membrane-spanning segment. Residues 129 to 142 (GAACGRLLRCEEAP) are Cytoplasmic-facing. The helical transmembrane segment at 143–163 (SRPALLYMAALGATLFAALGL) threads the bilayer. The Lumenal segment spans residues 164-166 (RST). Residues 167-187 (LLTVLGAGAQVAALLAALVGL) form a helical membrane-spanning segment. Residues 188 to 215 (LPWGGGTALRLALGRLGRGAGLAKVLPV) are Cytoplasmic-facing.

It belongs to the SFT2 family.

The protein resides in the membrane. May be involved in fusion of retrograde transport vesicles derived from an endocytic compartment with the Golgi complex. This is Vesicle transport protein SFT2C from Homo sapiens (Human).